A 345-amino-acid chain; its full sequence is NADPH dehydrogenase (345 aa).

Residue Ser23–Cys26 participates in FMN binding. Residue Tyr28 coordinates substrate. FMN is bound by residues Ala60 and Gln102. His164–His167 is a binding site for substrate. Residues Arg215 and Gly307–Arg308 each bind FMN.

The protein belongs to the NADH:flavin oxidoreductase/NADH oxidase family. NamA subfamily. In terms of assembly, homotetramer. The cofactor is FMN.

It catalyses the reaction A + NADPH + H(+) = AH2 + NADP(+). Functionally, catalyzes the reduction of the double bond of an array of alpha,beta-unsaturated aldehydes and ketones. It also reduces the nitro group of nitroester and nitroaromatic compounds. It could have a role in detoxification processes. In Bacillus cereus (strain ATCC 10987 / NRS 248), this protein is NADPH dehydrogenase.